Consider the following 734-residue polypeptide: Photosystem I P700 chlorophyll a apoprotein A2 (734 aa).

8 helical membrane passes run 46–69, 135–158, 175–199, 273–291, 330–353, 369–395, 417–439, and 517–535; these read IFASHFGHLAIIFLWTSGNLFHVA, LYFGALGLLVLSTTLLFAGWLHLQ, LNHHLSGLFGVSSLAWSGHLIHVAI, IAHHHLAIAVVFIFAGHMY, LHMQLGLALASLGVATSLVAQHMY, AALYTHHQYIAGFLMVGAFAHGAIFFV, AIISHLSWVSLFLGFHTLGLYIH, and FLVHHAIALGLHTTTLILV. Residues C559 and C568 each coordinate [4Fe-4S] cluster. The next 2 helical transmembrane spans lie at 575 to 596 and 643 to 665; these read AFYLAMFWMLNTISWVTFYWHW and QAVWAWMFLFGHLIWATGFMFLI. Residues H654, M662, and Y670 each contribute to the chlorophyll a site. Residue W671 participates in phylloquinone binding. A helical transmembrane segment spans residues 707 to 727; sequence LVGLAHFTVGFIFTFAPFVIA.

The protein belongs to the PsaA/PsaB family. The PsaA/B heterodimer binds the P700 chlorophyll special pair and subsequent electron acceptors. PSI consists of a core antenna complex that captures photons, and an electron transfer chain that converts photonic excitation into a charge separation. The eukaryotic PSI reaction center is composed of at least 11 subunits. The cofactor is P700 is a chlorophyll a/chlorophyll a' dimer, A0 is one or more chlorophyll a, A1 is one or both phylloquinones and FX is a shared 4Fe-4S iron-sulfur center..

It localises to the plastid. Its subcellular location is the chloroplast thylakoid membrane. It carries out the reaction reduced [plastocyanin] + hnu + oxidized [2Fe-2S]-[ferredoxin] = oxidized [plastocyanin] + reduced [2Fe-2S]-[ferredoxin]. In terms of biological role, psaA and PsaB bind P700, the primary electron donor of photosystem I (PSI), as well as the electron acceptors A0, A1 and FX. PSI is a plastocyanin/cytochrome c6-ferredoxin oxidoreductase, converting photonic excitation into a charge separation, which transfers an electron from the donor P700 chlorophyll pair to the spectroscopically characterized acceptors A0, A1, FX, FA and FB in turn. Oxidized P700 is reduced on the lumenal side of the thylakoid membrane by plastocyanin or cytochrome c6. This Emiliania huxleyi (Coccolithophore) protein is Photosystem I P700 chlorophyll a apoprotein A2.